A 302-amino-acid polypeptide reads, in one-letter code: Nucleotide-binding protein Rsph17029_0317 (302 aa).

Residue 15-22 (GPSGAGRT) participates in ATP binding. 62–65 (DVRN) is a binding site for GTP.

Belongs to the RapZ-like family.

Displays ATPase and GTPase activities. This is Nucleotide-binding protein Rsph17029_0317 from Cereibacter sphaeroides (strain ATCC 17029 / ATH 2.4.9) (Rhodobacter sphaeroides).